The following is a 437-amino-acid chain: Photosystem II stability/assembly factor HCF136, chloroplastic (437 aa).

The protein belongs to the Ycf48 family.

It localises to the plastid. The protein localises to the chloroplast thylakoid membrane. In terms of biological role, essential for photosystem II (PSII) biogenesis; required for assembly of an early intermediate in PSII assembly that includes D2 (psbD) and cytochrome b559. This Cyanidioschyzon merolae (strain NIES-3377 / 10D) (Unicellular red alga) protein is Photosystem II stability/assembly factor HCF136, chloroplastic.